The chain runs to 412 residues: Solute carrier family 22 member 18 (412 aa).

10 helical membrane passes run glycine 16–phenylalanine 36, valine 51–phenylalanine 71, leucine 117–alanine 137, leucine 148–threonine 168, alanine 176–valine 196, phenylalanine 232–isoleucine 252, alanine 264–glycine 284, alanine 294–serine 314, valine 316–valine 336, and glycine 380–tryptophan 400.

Belongs to the major facilitator (TC 2.A.1) superfamily. Organic cation transporter (TC 2.A.1.19) family.

The protein localises to the apical cell membrane. May act as a transporter of organic cations based on a proton efflux antiport mechanism. May play a role in the transport of chloroquine and quinidine-related compounds in kidney. Plays a role in the regulation of lipid metabolism. This Rattus norvegicus (Rat) protein is Solute carrier family 22 member 18 (Slc67a1).